The chain runs to 361 residues: Histidinol-phosphate aminotransferase (361 aa).

Residue K219 is modified to N6-(pyridoxal phosphate)lysine.

This sequence belongs to the class-II pyridoxal-phosphate-dependent aminotransferase family. Histidinol-phosphate aminotransferase subfamily. In terms of assembly, homodimer. Requires pyridoxal 5'-phosphate as cofactor.

It carries out the reaction L-histidinol phosphate + 2-oxoglutarate = 3-(imidazol-4-yl)-2-oxopropyl phosphate + L-glutamate. Its pathway is amino-acid biosynthesis; L-histidine biosynthesis; L-histidine from 5-phospho-alpha-D-ribose 1-diphosphate: step 7/9. The protein is Histidinol-phosphate aminotransferase of Acinetobacter baylyi (strain ATCC 33305 / BD413 / ADP1).